We begin with the raw amino-acid sequence, 1019 residues long: Limulus clotting factor C (1019 aa).

The signal sequence occupies residues 1-25 (MVLASFLVSGLVLGLLAQKMRPVQS). Residues 102–137 (YGTWCSGECQCKNGGICDQRTGACACRDRYEGVHCE) enclose the EGF-like domain. Cystine bridges form between C106-C118, C112-C125, C127-C136, C142-C182, C168-C195, C199-C241, C227-C254, C260-C308, C294-C321, C331-C350, C354-C374, C436-C447, C464-C564, C538-C556, C576-C621, C607-C634, and C720-C748. Sushi domains follow at residues 140–197 (KGCP…KCIR), 198–256 (ECAM…QCKN), and 258–323 (VFCP…SCVK). An LCCL domain is found at 325–421 (ADREVDCDSK…EELKSLARSF (97 aa)). The C-type lectin domain maps to 436 to 568 (CPDGWFEVDE…PSSFACMMDL (133 aa)). N-linked (GlcNAc...) asparagine glycosylation is found at N523 and N534. 2 consecutive Sushi domains span residues 574 to 636 (AKCD…RCIK) and 689 to 750 (PRSS…SCIP). 3 N-linked (GlcNAc...) asparagine glycosylation sites follow: N624, N740, and N767. Residues 763 to 1019 (IWNGNSTEIG…VFLSWIRQFI (257 aa)) enclose the Peptidase S1 domain. A disulfide bridge links C794 with C810. Active-site charge relay system residues include H809 and D865. Residue N912 is glycosylated (N-linked (GlcNAc...) asparagine). C932 and C951 are oxidised to a cystine. Residue D960 coordinates substrate. The cysteines at positions 962 and 996 are disulfide-linked. S966 serves as the catalytic Charge relay system.

This sequence belongs to the peptidase S1 family. Heterodimer of a light chain and a heavy chain linked by a disulfide bond.

Its subcellular location is the secreted. The enzyme catalyses Selective cleavage of 103-Arg-|-Ser-104 and 124-Ile-|-Ile-125 bonds in Limulus clotting factor B to form activated factor B. Cleavage of -Pro-Arg-|-Xaa- bonds in synthetic substrates.. Its activity is regulated as follows. Activated by Gram-negative bacterial lipopolysaccharides and chymotrypsin. Functionally, this enzyme is closely associated with an endotoxin-sensitive hemolymph coagulation system which may play important roles in both hemostasis and host defense mechanisms. Its active form catalyzes the activation of factor B. The sequence is that of Limulus clotting factor C from Carcinoscorpius rotundicauda (Mangrove horseshoe crab).